A 186-amino-acid chain; its full sequence is ADP-ribosylation factor-like protein 8A (186 aa).

An intramembrane region (note=Mediates targeting to membranes) is located at residues M1 to E19. GTP contacts are provided by residues Q29–T35, D71–Q75, and N130–D133.

This sequence belongs to the small GTPase superfamily. Arf family.

The protein resides in the late endosome membrane. Its subcellular location is the lysosome membrane. It is found in the cytoplasm. The protein localises to the cytoskeleton. It localises to the spindle. The protein resides in the cell projection. Its subcellular location is the axon. It is found in the synapse. Plays a role in lysosome motility. In neurons, mediates the anterograde axonal long-range transport of presynaptic lysosome-related vesicles required for presynaptic biogenesis and synaptic function. May play a role in chromosome segregation. This chain is ADP-ribosylation factor-like protein 8A (ARL8A), found in Gallus gallus (Chicken).